Consider the following 107-residue polypeptide: Benzene 1,2-dioxygenase system ferredoxin subunit (107 aa).

The 96-residue stretch at 4-99 (TYILRQSDLP…IKVEGDEVHV (96 aa)) folds into the Rieske domain. Residues Cys-43, His-45, Cys-62, and His-65 each coordinate [2Fe-2S] cluster.

It belongs to the bacterial ring-hydroxylating dioxygenase ferredoxin component family. In terms of assembly, this dioxygenase system consists of four proteins: the two subunits of the hydroxylase component (BnzA and BnzB), a ferredoxin (BnzC) and a ferredoxin reductase (BnzD).

Its pathway is aromatic compound metabolism; benzene degradation; catechol from benzene: step 1/2. This protein seems to be a 2Fe-2S ferredoxin. In Pseudomonas putida (Arthrobacter siderocapsulatus), this protein is Benzene 1,2-dioxygenase system ferredoxin subunit (bnzC).